The chain runs to 445 residues: Exodeoxyribonuclease 7 large subunit (445 aa).

Belongs to the XseA family. In terms of assembly, heterooligomer composed of large and small subunits.

It is found in the cytoplasm. It carries out the reaction Exonucleolytic cleavage in either 5'- to 3'- or 3'- to 5'-direction to yield nucleoside 5'-phosphates.. Functionally, bidirectionally degrades single-stranded DNA into large acid-insoluble oligonucleotides, which are then degraded further into small acid-soluble oligonucleotides. The protein is Exodeoxyribonuclease 7 large subunit of Xanthomonas oryzae pv. oryzae (strain MAFF 311018).